The primary structure comprises 451 residues: MLLNPLFAQLGENRHVLVGFSGGLDSTVLLHLLVCLRQQLIPELNIRAIHIHHGLNPQADSWVKHCMQQCDQWKIELKVVRVNIDPRQNGIEAAARTARYQAFSANLAAKEVLLTAQHLDDQCETFLLALKRGSGPAGLSAMAAKMPFAHSQLLRPLLAFSREILENYAQAQQLQWIEDDSNQDDRFDRNFLRLNVLPILNQRWPHFAQATARSAGLCAEQEQLLDELLAENLQQLQGPDRSLSIDGLLQASMAKRAAILRRWLASLGAPMPSQSQLQRLWLEVAMARQDAEPQLMIGTRQVRRFRQHLYLLMPLAEITTNYLPWATVKATPNSSIIPLLPEPLWLPADLGVLRFVSAGGQAVRPATVGEEISVRFGLQGDIKIVGRHHSRQSKKVWQELGIPPWQRERIPLLYFGEQLIAAAGVFVTQAGQANENEPCWHLDWDKQLKLG.

21 to 26 (SGGLDS) serves as a coordination point for ATP.

This sequence belongs to the tRNA(Ile)-lysidine synthase family.

The protein localises to the cytoplasm. It catalyses the reaction cytidine(34) in tRNA(Ile2) + L-lysine + ATP = lysidine(34) in tRNA(Ile2) + AMP + diphosphate + H(+). Functionally, ligates lysine onto the cytidine present at position 34 of the AUA codon-specific tRNA(Ile) that contains the anticodon CAU, in an ATP-dependent manner. Cytidine is converted to lysidine, thus changing the amino acid specificity of the tRNA from methionine to isoleucine. In Yersinia pseudotuberculosis serotype O:1b (strain IP 31758), this protein is tRNA(Ile)-lysidine synthase.